Consider the following 1255-residue polypeptide: Membrane-associated guanylate kinase, WW and PDZ domain-containing protein 1 (1255 aa).

The PDZ 1 domain maps to 17–105 (ECTVKRGPQG…AVTFKAVRQG (89 aa)). The 192-residue stretch at 96-287 (AVTFKAVRQG…APITDPSQKF (192 aa)) folds into the Guanylate kinase-like domain. 103–110 (RQGGRLNK) provides a ligand contact to ATP. Disordered stretches follow at residues 208 to 227 (HSLQ…SYND) and 235 to 265 (HTEN…TLQE). Residues 300–333 (GPLPENWEMAYTENGEVYFIDHNAKTTSWLDPRC) enclose the WW 1 domain. Ser-357 bears the Phosphoserine mark. Residues 359 to 392 (LELPAGWEKIEDPVYGVYYVDHINRKTQYENPVL) enclose the WW 2 domain. Residues 395 to 462 (KRKRQLEQQQ…QGKPFFTRNP (68 aa)) are disordered. Residues 402 to 414 (QQQQQQQHQQQPQ) are compositionally biased toward low complexity. Residues 434 to 444 (PVAPSHPPSNP) show a composition bias toward pro residues. A PDZ 2 domain is found at 471–553 (HTKLRKSSRG…GASVDLELCR (83 aa)). The segment covering 585–601 (QETYDSPASHSSKTGKV) has biased composition (polar residues). Disordered regions lie at residues 585–622 (QETY…SSHG) and 719–820 (QRGG…GERD). Residues 642–720 (TVHIVKGPMG…GSEVTLLVQR (79 aa)) form the PDZ 3 domain. 2 positions are modified to phosphoserine: Ser-729 and Ser-740. A compositionally biased stretch (low complexity) spans 741-755 (QNSSQHSVSSLRSLH). The residue at position 799 (Ser-799) is a Phosphoserine. Positions 840-922 (DIFLWRKETG…QGHVNLTVRR (83 aa)) constitute a PDZ 4 domain. Residues 932–984 (ENEVPSPASSHHSSNQPASLTEEKRTPQGSQNSLNTVSSGSGSTSGIGSGGGG) form a disordered region. Polar residues-rich tracts occupy residues 938-950 (PASS…QPAS) and 958-967 (PQGSQNSLNT). The span at 974 to 984 (STSGIGSGGGG) shows a compositional bias: gly residues. The PDZ 5 domain occupies 997 to 1093 (DVEIRRGENE…TVTLRIIPGD (97 aa)). Ser-1070 is modified (phosphoserine). Residues 1111-1129 (TTTHAPSQQGTQETRTTTK) are compositionally biased toward polar residues. The disordered stretch occupies residues 1111 to 1142 (TTTHAPSQQGTQETRTTTKPKPDSQFEFKGPQ). A PDZ 6 domain is found at 1151–1233 (TVELERGAKG…RVRLFLRRGD (83 aa)).

As to quaternary structure, part of a complex composed of AMOTL2, MAGI1 and CDH5, within the complex AMOTL2 acts as a scaffold protein for the interaction of MAGI1 with CDH5. The complex is required for coupling actin fibers to cell junctions in endothelial cells. Interacts through its WW 2 domain with SYNPO and through its PDZ 5 domain with ACTN4. Interacts with cytoplasmic domain of ADGRB1. Interacts via its WW domains with DRPLA. Interacts with ESAM, LRP2 and CXADR. May interact with CTNNB1. Interacts through its PDZ 1 domain with NET1. Interacts with ASIC3 and AMOT. Interacts with FCHSD2. Interacts with IGSF5/JAM4 and through its PDZ 2 and 3 domains with NPHS1 forming a tripartite complex. Interacts with DDN. May interact (via PDZ domain) with RAPGEF2. Interacts with DLL1. Interacts with KCNJ10 and possibly with KCNJ10/KCNJ16 heterodimer; this interaction may facilitate KCNJ10/KCNJ16 potassium channel expression at the basolateral membrane in kidney tubular cells. Interacts with PRRG4 (via cytoplasmic domain).

Its subcellular location is the cell junction. It is found in the tight junction. It localises to the cytoplasm. The protein resides in the membrane. Functionally, plays a role in coupling actin fibers to cell junctions in endothelial cells, via its interaction with AMOTL2 and CDH5. May regulate acid-induced ASIC3 currents by modulating its expression at the cell surface. This chain is Membrane-associated guanylate kinase, WW and PDZ domain-containing protein 1 (Magi1), found in Rattus norvegicus (Rat).